Consider the following 198-residue polypeptide: Na(+)-translocating NADH-quinone reductase subunit E (198 aa).

The next 6 membrane-spanning stretches (helical) occupy residues 11–31 (SIFI…FLAV), 39–59 (MGLG…NNLI), 77–97 (FLSF…LEMA), 110–130 (GIFL…SFMV), 140–160 (VVYG…MAGI), and 176–196 (LGIT…FSGI).

The protein belongs to the NqrDE/RnfAE family. Composed of six subunits; NqrA, NqrB, NqrC, NqrD, NqrE and NqrF.

Its subcellular location is the cell inner membrane. The catalysed reaction is a ubiquinone + n Na(+)(in) + NADH + H(+) = a ubiquinol + n Na(+)(out) + NAD(+). In terms of biological role, NQR complex catalyzes the reduction of ubiquinone-1 to ubiquinol by two successive reactions, coupled with the transport of Na(+) ions from the cytoplasm to the periplasm. NqrA to NqrE are probably involved in the second step, the conversion of ubisemiquinone to ubiquinol. This Aeromonas salmonicida (strain A449) protein is Na(+)-translocating NADH-quinone reductase subunit E.